The primary structure comprises 755 residues: Serine/threonine-protein kinase GL21140 (755 aa).

Over residues 18–52 (QASASGSGTPKKTAASSAAAQNSKQLLDQLSQQQK) the composition is skewed to low complexity. The interval 18-128 (QASASGSGTP…GSANTNGSAS (111 aa)) is disordered. Composition is skewed to basic and acidic residues over residues 53–66 (AQEE…RDCD) and 74–84 (EPEKDLDELRD). The segment covering 87–99 (GSLTGSGSVGKSN) has biased composition (polar residues). Residues 100-128 (GSLSGASSTTSAPAGTSTPGSANTNGSAS) are compositionally biased toward low complexity. 2 consecutive Doublecortin domains span residues 157-243 (HRIK…VDYN) and 314-397 (RIVT…VDDF). Positions 484 to 742 (YTLSQIIGDG…SEDILDHYWT (259 aa)) constitute a Protein kinase domain. ATP contacts are provided by residues 490 to 498 (IGDGNFAIV) and Lys-513. Asp-605 (proton acceptor) is an active-site residue.

Belongs to the protein kinase superfamily. CAMK Ser/Thr protein kinase family. CaMK subfamily.

The enzyme catalyses L-seryl-[protein] + ATP = O-phospho-L-seryl-[protein] + ADP + H(+). The catalysed reaction is L-threonyl-[protein] + ATP = O-phospho-L-threonyl-[protein] + ADP + H(+). This Drosophila persimilis (Fruit fly) protein is Serine/threonine-protein kinase GL21140.